The primary structure comprises 311 residues: Aspartate carbamoyltransferase catalytic subunit (311 aa).

Residues Arg55 and Thr56 each contribute to the carbamoyl phosphate site. L-aspartate is bound at residue Lys85. Arg106, His135, and Gln138 together coordinate carbamoyl phosphate. The L-aspartate site is built by Arg168 and Arg230. Positions 268 and 269 each coordinate carbamoyl phosphate.

This sequence belongs to the aspartate/ornithine carbamoyltransferase superfamily. ATCase family. In terms of assembly, heterododecamer (2C3:3R2) of six catalytic PyrB chains organized as two trimers (C3), and six regulatory PyrI chains organized as three dimers (R2).

It carries out the reaction carbamoyl phosphate + L-aspartate = N-carbamoyl-L-aspartate + phosphate + H(+). Its pathway is pyrimidine metabolism; UMP biosynthesis via de novo pathway; (S)-dihydroorotate from bicarbonate: step 2/3. Functionally, catalyzes the condensation of carbamoyl phosphate and aspartate to form carbamoyl aspartate and inorganic phosphate, the committed step in the de novo pyrimidine nucleotide biosynthesis pathway. The polypeptide is Aspartate carbamoyltransferase catalytic subunit (Salmonella dublin (strain CT_02021853)).